The chain runs to 528 residues: Phosphoenolpyruvate carboxykinase (ATP) (528 aa).

Substrate is bound by residues R56, Y192, and K198. Residues K198, H217, and 233-241 (GLSGTGKTT) each bind ATP. K198 and H217 together coordinate Mn(2+). A Mn(2+)-binding site is contributed by D254. Residues E282, R319, and T444 each coordinate ATP. R319 contributes to the substrate binding site.

Belongs to the phosphoenolpyruvate carboxykinase (ATP) family. Requires Mn(2+) as cofactor.

The protein resides in the cytoplasm. It carries out the reaction oxaloacetate + ATP = phosphoenolpyruvate + ADP + CO2. Its pathway is carbohydrate biosynthesis; gluconeogenesis. Involved in the gluconeogenesis. Catalyzes the conversion of oxaloacetate (OAA) to phosphoenolpyruvate (PEP) through direct phosphoryl transfer between the nucleoside triphosphate and OAA. The chain is Phosphoenolpyruvate carboxykinase (ATP) from Geobacillus kaustophilus (strain HTA426).